The sequence spans 528 residues: Coiled-coil domain-containing protein 116 (528 aa).

The segment at 43-68 (GHVPHPPSTCGSSALQNQRRNKRHPQ) is disordered. Polar residues predominate over residues 51–60 (TCGSSALQNQ). The stretch at 81-104 (HVLDSLETVVEKATERMAAMKTEA) forms a coiled coil. Disordered stretches follow at residues 335-444 (PLFP…RQRA) and 497-528 (SSSP…THHS). The segment covering 363 to 378 (PTNSGQPHPTVSSPKT) has biased composition (polar residues). Ser-389 carries the post-translational modification Phosphoserine. Residues 419-429 (HSREKEPDSDP) are compositionally biased toward basic and acidic residues. Residues 434-443 (PPVSLSSRQR) show a composition bias toward polar residues. Positions 497-510 (SSSPSSLCPEVTSS) are enriched in low complexity.

The protein resides in the cytoplasm. It localises to the cytoskeleton. The protein localises to the microtubule organizing center. It is found in the centrosome. The protein is Coiled-coil domain-containing protein 116 (CCDC116) of Macaca fascicularis (Crab-eating macaque).